Consider the following 183-residue polypeptide: MASRAGPRAAGTDGSDFQHRERVAMHYQMSVTLKYEIKKLIYVHLVIWLLLVAKMSVGHLRLLSHDQVAMPYQWEYPYLLSILPSLLGLLSFPRNNISYLVLSMISMGLFSIAPLIYGSMEMFPAAQQLYRHGKAYRFLFGFSAVSIMYLVLVLAVQVHAWQLYYSKKLLDSWFTSTQEKKHK.

At 1 to 39 (MASRAGPRAAGTDGSDFQHRERVAMHYQMSVTLKYEIKK) the chain is on the cytoplasmic side. Residue Ser3 is modified to Phosphoserine. Residues 40–60 (LIYVHLVIWLLLVAKMSVGHL) form a helical membrane-spanning segment. At 61-71 (RLLSHDQVAMP) the chain is on the lumenal side. A helical transmembrane segment spans residues 72-92 (YQWEYPYLLSILPSLLGLLSF). Over 93 to 96 (PRNN) the chain is Cytoplasmic. The chain crosses the membrane as a helical span at residues 97–117 (ISYLVLSMISMGLFSIAPLIY). The Lumenal portion of the chain corresponds to 118–137 (GSMEMFPAAQQLYRHGKAYR). Residues 138-158 (FLFGFSAVSIMYLVLVLAVQV) form a helical membrane-spanning segment. The Cytoplasmic portion of the chain corresponds to 159–183 (HAWQLYYSKKLLDSWFTSTQEKKHK).

This sequence belongs to the jagunal family. In terms of assembly, interacts with COPA, COPB2 and COPG2. In terms of tissue distribution, ubiquitously expressed.

Its subcellular location is the endoplasmic reticulum membrane. Functionally, endoplasmic reticulum transmembrane protein involved in vesicle-mediated transport, which is required for neutrophil function. Required for vesicle-mediated transport; it is however unclear whether it is involved in early secretory pathway or intracellular protein transport. Acts as a regulator of neutrophil function, probably via its role in vesicle-mediated transport: required for defense against fungal pathogens and for granulocyte colony-stimulating factor (GM-CSF) signaling pathway; possibly by regulating glycosylation and/or targeting of proteins contributing to the viability and migration of neutrophils. The sequence is that of Protein jagunal homolog 1 from Homo sapiens (Human).